The chain runs to 3259 residues: Golgin subfamily B member 1 (3259 aa).

Met-1 carries the post-translational modification N-acetylmethionine. The Cytoplasmic portion of the chain corresponds to 1–3235 (MLSRLSGLAN…LRSLCHSRTR (3235 aa)). Phosphoserine is present on residues Ser-6, Ser-17, Ser-138, and Ser-528. The stretch at 48–593 (EDVQERLAYA…RAEEADHEVL (546 aa)) forms a coiled coil. A disordered region spans residues 119 to 142 (GTVLPTEPQSEEQLSKHDKSSTEE). Positions 131-142 (QLSKHDKSSTEE) are enriched in basic and acidic residues. Positions 624 to 652 (LMPNEESSLPAVEKEQASTEHQSRTSEEI) are disordered. Positions 635-650 (VEKEQASTEHQSRTSE) are enriched in basic and acidic residues. Ser-653 bears the Phosphoserine mark. Coiled coils occupy residues 677-1028 (DIGQ…KEIP), 1062-1245 (LKQT…ESID), and 1301-1779 (GTSV…TEKH). The segment at 944–963 (AKKEQVEEDNEVSSGLKQNY) is disordered. Positions 1747-1763 (SEKDSLSEEVQDLKHQI) are enriched in basic and acidic residues. Residues 1747 to 1829 (SEKDSLSEEV…SANPAVSKDF (83 aa)) form a disordered region. 2 stretches are compositionally biased toward polar residues: residues 1782-1794 (QTNV…QSIP) and 1802-1820 (SLSM…SAKS). The stretch at 1828-3185 (DFSSHDEINN…EQIRRLEHSE (1358 aa)) forms a coiled coil. A phosphoserine mark is found at Ser-2216, Ser-2735, Ser-2872, and Ser-2884. A disordered region spans residues 2856 to 2876 (RKSEEGKQRSAAQPSTSPAEV). A compositionally biased stretch (polar residues) spans 2865–2875 (SAAQPSTSPAE). Positions 2998-3021 (TQPLKVQYQRQASPETSASPDGSQ) are disordered. Ser-3037 is subject to Phosphoserine. The disordered stretch occupies residues 3107-3140 (IDVAPGAPQEKNGVHRKSDPEELREPQQSFSEAQ). Positions 3118–3131 (NGVHRKSDPEELRE) are enriched in basic and acidic residues. The chain crosses the membrane as a helical span at residues 3236-3256 (VPLLAAIYFLMIHVLLILCFT). Residues 3257–3259 (GHL) lie on the Lumenal side of the membrane.

Homodimer; disulfide-linked. Interacts with PLK3.

It is found in the golgi apparatus membrane. May participate in forming intercisternal cross-bridges of the Golgi complex. In Homo sapiens (Human), this protein is Golgin subfamily B member 1 (GOLGB1).